Here is a 394-residue protein sequence, read N- to C-terminus: Ribulose bisphosphate carboxylase large chain (394 aa).

At K5 the chain carries N6,N6,N6-trimethyllysine. Substrate-binding residues include N114 and T164. The active-site Proton acceptor is the K166. K168 lines the substrate pocket. The Mg(2+) site is built by K192, D194, and E195. Residue K192 is modified to N6-carboxylysine. H285 acts as the Proton acceptor in catalysis. The substrate site is built by R286, H318, and S370.

It belongs to the RuBisCO large chain family. Type I subfamily. As to quaternary structure, heterohexadecamer of 8 large chains and 8 small chains. Mg(2+) serves as cofactor.

Its subcellular location is the plastid. The protein localises to the chloroplast. It catalyses the reaction 2 (2R)-3-phosphoglycerate + 2 H(+) = D-ribulose 1,5-bisphosphate + CO2 + H2O. It carries out the reaction D-ribulose 1,5-bisphosphate + O2 = 2-phosphoglycolate + (2R)-3-phosphoglycerate + 2 H(+). RuBisCO catalyzes two reactions: the carboxylation of D-ribulose 1,5-bisphosphate, the primary event in carbon dioxide fixation, as well as the oxidative fragmentation of the pentose substrate in the photorespiration process. Both reactions occur simultaneously and in competition at the same active site. The protein is Ribulose bisphosphate carboxylase large chain (rbcL) of Cabomba caroliniana (Carolina fanwort).